Consider the following 478-residue polypeptide: DNA gyrase subunit B (478 aa).

The Toprim domain occupies 319–438; sequence CEIYLVEGDS…GGHVYIAQPP (120 aa). Mg(2+)-binding residues include Glu325, Asp403, and Asp405.

This sequence belongs to the type II topoisomerase GyrB family. Heterotetramer, composed of two GyrA and two GyrB chains. In the heterotetramer, GyrA contains the active site tyrosine that forms a transient covalent intermediate with DNA, while GyrB binds cofactors and catalyzes ATP hydrolysis. Mg(2+) serves as cofactor. It depends on Mn(2+) as a cofactor. The cofactor is Ca(2+).

The protein resides in the cytoplasm. The enzyme catalyses ATP-dependent breakage, passage and rejoining of double-stranded DNA.. Its function is as follows. A type II topoisomerase that negatively supercoils closed circular double-stranded (ds) DNA in an ATP-dependent manner to modulate DNA topology and maintain chromosomes in an underwound state. Negative supercoiling favors strand separation, and DNA replication, transcription, recombination and repair, all of which involve strand separation. Also able to catalyze the interconversion of other topological isomers of dsDNA rings, including catenanes and knotted rings. Type II topoisomerases break and join 2 DNA strands simultaneously in an ATP-dependent manner. This Cytophaga aurantiaca protein is DNA gyrase subunit B (gyrB).